The primary structure comprises 405 residues: tRNA (uracil(54)-C(5))-methyltransferase (405 aa).

Positions 61, 67, 70, and 137 each coordinate [4Fe-4S] cluster. S-adenosyl-L-methionine is bound by residues Gln-252, Tyr-278, Thr-283, 299–300 (DS), Asp-326, and Asp-340. The active-site Nucleophile is Cys-367. The active-site Proton acceptor is Glu-399.

Belongs to the class I-like SAM-binding methyltransferase superfamily. RNA M5U methyltransferase family.

The catalysed reaction is uridine(54) in tRNA + S-adenosyl-L-methionine = 5-methyluridine(54) in tRNA + S-adenosyl-L-homocysteine + H(+). With respect to regulation, activated by magnesium ions. Functionally, catalyzes the formation of 5-methyl-uridine at position 54 (m5U54) in tRNA. This Pyrococcus abyssi (strain GE5 / Orsay) protein is tRNA (uracil(54)-C(5))-methyltransferase.